The sequence spans 2422 residues: Non-reducing polyketide synthase trt4 (2422 aa).

The interval 14 to 196 (VLFGPKCPKT…HHSDHTSVVQ (183 aa)) is N-terminal acylcarrier protein transacylase domain (SAT). Positions 289–314 (VEPPDSHHNTNTTQDSDVTTNASPLT) are disordered. The span at 297–312 (NTNTTQDSDVTTNASP) shows a compositional bias: polar residues. Positions 329-745 (TVPIAVTGMA…GSNAAIVLQE (417 aa)) constitute a Ketosynthase family 3 (KS3) domain. Active-site for beta-ketoacyl synthase activity residues include cysteine 494, histidine 629, and histidine 668. The segment at 856–1121 (LCFGGQTGNT…CPIDLSGPQA (266 aa)) is malonyl-CoA:ACP transacylase (MAT) domain. Catalysis depends on serine 904, which acts as the For acyl/malonyl transferase activity. Residues 1190–1316 (PSLVKLLNND…GKISISSEAN (127 aa)) form an N-terminal hotdog fold region. The 306-residue stretch at 1190–1495 (PSLVKLLNND…FTCVSIQSLK (306 aa)) folds into the PKS/mFAS DH domain. The interval 1191 to 1494 (SLVKLLNNDG…TFTCVSIQSL (304 aa)) is product template (PT) domain. Histidine 1221 (proton acceptor; for dehydratase activity) is an active-site residue. Residues 1345–1495 (SSGLKRSTVY…FTCVSIQSLK (151 aa)) form a C-terminal hotdog fold region. The active-site Proton donor; for dehydratase activity is the aspartate 1402. The Carrier domain occupies 1535–1612 (SRSEDGLRVV…GLVQRIFPGG (78 aa)). Serine 1572 carries the post-translational modification O-(pantetheine 4'-phosphoryl)serine. The disordered stretch occupies residues 1615 to 1636 (AHVETHSQPPDKIGITTGDRMP). The interval 1774-2007 (QHASEHKLLH…GFNWVDWTDN (234 aa)) is methyltransferase (CMeT) domain. A thioesterase (TE) domain region spans residues 2036 to 2383 (NAVAEETLVY…LAPHIPTDEY (348 aa)). Catalysis depends on for thioesterase activity residues serine 2159, aspartate 2320, and histidine 2352.

It carries out the reaction 3 malonyl-CoA + acetyl-CoA + 2 S-adenosyl-L-methionine = 3,5-dimethylorsellinate + 2 S-adenosyl-L-homocysteine + 3 CO2 + 4 CoA. It participates in secondary metabolite biosynthesis; terpenoid biosynthesis. Non-reducing polyketide synthase; part of the gene cluster that mediates the biosynthesis of terretonin, a fungal meroterpenoid that acts as a mycotoxin. The first step of the pathway is the synthesis of 3,5-dimethylorsellinic acid (DMOA) by the polyketide synthase trt4. DMOA is then prenylated into farnesyl-DMOA by the polyprenyl transferase trt2. Methylation by the methyltransferase trt5 then leads to farnesyl-DMOA methyl ester which is further subject to epoxidation by the FAD-dependent monooxygenase trt8 to yield epoxyfarnesyl-DMOA methyl ester. Cyclization of epoxyfarnesyl-DMOA methyl ester by the terpene cyclase trt1 leads to a tetracycle intermediate which is in turn converted to preterretonin. Dehydrogenase trt9 comes next to transform preterretonin to preterrenoid. The FAD-dependent monooxygenase trt3 is then required for the C-hydroxylation at C16 of preterrenoid to yield terrenoid. The cytochrome P450 trt6 catalyzes three successive oxidations to transform terrenoid into an unstable intermediate, which then undergoes the D-ring expansion and unusual rearrangement of the methoxy group to afford the core skeleton of terretonin. Trt14 catalyzes the D-ring expansion of terretonin involving intramolecular methoxy rearrangement as well as the hydrolysis of the expanded D-ring and the methyl ester moiety. Finally, the nonheme iron-dependent dioxygenase trt7 accomplishes the last two oxidation reactions steps to complete the biosynthesis of terretonin. Terretonin C is produced via spontaneous decarboxylation of the terretonin precursor. Another shunt product of the terretonin biosynthesis is dihydrofarnesyl-DMOA, derived from epoxyfarnesyl-DMOA through hydrolysis of the epoxide. The chain is Non-reducing polyketide synthase trt4 from Aspergillus terreus (strain NIH 2624 / FGSC A1156).